We begin with the raw amino-acid sequence, 231 residues long: Small proline-rich protein 3 (231 aa).

The tract at residues 1–104 (MSSYQQKQPF…GSGYSVVPQP (104 aa)) is disordered. Ser2 carries the post-translational modification N-acetylserine. 21 tandem repeats follow at residues 55–62 (EQGYVKIP), 63–70 (EQGSIKVP), 71–78 (DTGYTKIP), 79–86 (DSGNTKVP), 87–94 (ESGCTSVP), 95–102 (GSGYSVVP), 103–110 (QPGYTKVP), 111–118 (DQGYTKVP), 119–126 (ESGCTSVP), 127–134 (GSGYSVVP), 135–142 (QPGYTKVP), 143–150 (ESGCTSVP), 151–158 (GPGYPTVP), 159–166 (QPGYTKVP), 167–174 (ESGCTSVP), 175–182 (GSGYSVIP), 183–190 (QPSYTKVP), 191–198 (ESGCTSVP), 199–206 (GPGYPTVP), 207–214 (QPGYTKVQ), and 215–222 (EPNPSIVT). The tract at residues 55–222 (EQGYVKIPEQ…VQEPNPSIVT (168 aa)) is 21 X 8 AA approximate tandem repeats. Over residues 80 to 94 (SGNTKVPESGCTSVP) the composition is skewed to polar residues. Residues 188–231 (KVPESGCTSVPGPGYPTVPQPGYTKVQEPNPSIVTPGLSQKKTK) form a disordered region. Polar residues predominate over residues 214–231 (QEPNPSIVTPGLSQKKTK).

Belongs to the cornifin (SPRR) family. In terms of tissue distribution, suprabasal layers of the squamous epithelia of esophagus, tongue and oral mucosa.

The protein localises to the cytoplasm. In terms of biological role, can serve as a substrate in transglutaminase-catalyzed cross linking reactions and can function as a cross-linked envelope precursor. This is Small proline-rich protein 3 (SPRR3) from Oryctolagus cuniculus (Rabbit).